The primary structure comprises 445 residues: Phosphoglucosamine mutase (445 aa).

The active-site Phosphoserine intermediate is Ser101. Mg(2+)-binding residues include Ser101, Asp240, Asp242, and Asp244. A Phosphoserine modification is found at Ser101.

The protein belongs to the phosphohexose mutase family. Mg(2+) serves as cofactor. Activated by phosphorylation.

It catalyses the reaction alpha-D-glucosamine 1-phosphate = D-glucosamine 6-phosphate. Catalyzes the conversion of glucosamine-6-phosphate to glucosamine-1-phosphate. The chain is Phosphoglucosamine mutase from Pseudomonas fluorescens (strain SBW25).